The primary structure comprises 604 residues: Elongation factor 4 (604 aa).

Residues 7 to 189 (KRIRNFCIIA…SVVDRVPPPA (183 aa)) enclose the tr-type G domain. Residues 19–24 (DHGKST) and 136–139 (NKID) contribute to the GTP site.

It belongs to the TRAFAC class translation factor GTPase superfamily. Classic translation factor GTPase family. LepA subfamily.

The protein localises to the cell inner membrane. It carries out the reaction GTP + H2O = GDP + phosphate + H(+). In terms of biological role, required for accurate and efficient protein synthesis under certain stress conditions. May act as a fidelity factor of the translation reaction, by catalyzing a one-codon backward translocation of tRNAs on improperly translocated ribosomes. Back-translocation proceeds from a post-translocation (POST) complex to a pre-translocation (PRE) complex, thus giving elongation factor G a second chance to translocate the tRNAs correctly. Binds to ribosomes in a GTP-dependent manner. The chain is Elongation factor 4 from Synechococcus sp. (strain CC9311).